The following is a 493-amino-acid chain: Proline--tRNA ligase (493 aa).

The protein belongs to the class-II aminoacyl-tRNA synthetase family. ProS type 3 subfamily. In terms of assembly, homodimer.

The protein localises to the cytoplasm. It catalyses the reaction tRNA(Pro) + L-proline + ATP = L-prolyl-tRNA(Pro) + AMP + diphosphate. Catalyzes the attachment of proline to tRNA(Pro) in a two-step reaction: proline is first activated by ATP to form Pro-AMP and then transferred to the acceptor end of tRNA(Pro). The polypeptide is Proline--tRNA ligase (Porphyromonas gingivalis (strain ATCC 33277 / DSM 20709 / CIP 103683 / JCM 12257 / NCTC 11834 / 2561)).